The chain runs to 65 residues: uncharacterized protein (65 aa).

A run of 2 helical transmembrane segments spans residues 12 to 31 and 41 to 63; these read IVKWLIFTILLVASISLIVV and LVARATPLAIVVGLSAIAAAIIV.

It localises to the cell membrane. This is an uncharacterized protein from Halalkalibacterium halodurans (strain ATCC BAA-125 / DSM 18197 / FERM 7344 / JCM 9153 / C-125) (Bacillus halodurans).